Consider the following 179-residue polypeptide: Large ribosomal subunit protein uL5 (179 aa).

It belongs to the universal ribosomal protein uL5 family. As to quaternary structure, part of the 50S ribosomal subunit; part of the 5S rRNA/L5/L18/L25 subcomplex. Contacts the 5S rRNA and the P site tRNA. Forms a bridge to the 30S subunit in the 70S ribosome.

In terms of biological role, this is one of the proteins that bind and probably mediate the attachment of the 5S RNA into the large ribosomal subunit, where it forms part of the central protuberance. In the 70S ribosome it contacts protein S13 of the 30S subunit (bridge B1b), connecting the 2 subunits; this bridge is implicated in subunit movement. Contacts the P site tRNA; the 5S rRNA and some of its associated proteins might help stabilize positioning of ribosome-bound tRNAs. The protein is Large ribosomal subunit protein uL5 of Synechococcus sp. (strain CC9311).